We begin with the raw amino-acid sequence, 152 residues long: Nascent polypeptide-associated complex subunit beta (152 aa).

Disordered stretches follow at residues 19–39 (IGKG…AGDD) and 125–152 (NMQK…SKVE). Basic residues predominate over residues 23–32 (TPRRKVKRAP). Positions 36 to 101 (AGDDKKLQAT…GEDKELTELV (66 aa)) constitute an NAC-A/B domain.

The protein belongs to the NAC-beta family. In terms of assembly, part of the nascent polypeptide-associated complex (NAC), consisting of npc-1/egd2 and npc-2/egd1. NAC associates with ribosomes via npc-2/egd1.

It localises to the cytoplasm. It is found in the nucleus. Functionally, component of the nascent polypeptide-associated complex (NAC), a dynamic component of the ribosomal exit tunnel, protecting the emerging polypeptides from interaction with other cytoplasmic proteins to ensure appropriate nascent protein targeting. The NAC complex also promotes mitochondrial protein import by enhancing productive ribosome interactions with the outer mitochondrial membrane and blocks the inappropriate interaction of ribosomes translating non-secretory nascent polypeptides with translocation sites in the membrane of the endoplasmic reticulum. Npc-2/egd1 may act as a transcription factor that exert a negative effect on the expression of several genes that are transcribed by RNA polymerase II. In Neurospora crassa (strain ATCC 24698 / 74-OR23-1A / CBS 708.71 / DSM 1257 / FGSC 987), this protein is Nascent polypeptide-associated complex subunit beta (npc-2).